Reading from the N-terminus, the 213-residue chain is Ephrin-A2 (213 aa).

Residues 1–24 (MAPAQRPLLPLLLLLLPLPPPPFA) form the signal peptide. Positions 34 to 174 (SDRYAVYWNR…RLKVYVRPTN (141 aa)) constitute an Ephrin RBD domain. N-linked (GlcNAc...) asparagine glycosylation occurs at asparagine 42. 2 disulfides stabilise this stretch: cysteine 73–cysteine 114 and cysteine 102–cysteine 163. Asparagine 174 and asparagine 188 each carry an N-linked (GlcNAc...) asparagine glycan. Asparagine 188 carries the GPI-anchor amidated asparagine lipid modification. A propeptide spans 189–213 (NSCSSPGGCRLFLSTIPVLWTLLGS) (removed in mature form).

The protein belongs to the ephrin family. Binds to the receptor tyrosine kinases EPHA3, EPHA4 and EPHA5. Interacts with EPHA8; activates EPHA8.

The protein resides in the cell membrane. Cell surface GPI-bound ligand for Eph receptors, a family of receptor tyrosine kinases which are crucial for migration, repulsion and adhesion during neuronal, vascular and epithelial development. Binds promiscuously Eph receptors residing on adjacent cells, leading to contact-dependent bidirectional signaling into neighboring cells. The signaling pathway downstream of the receptor is referred to as forward signaling while the signaling pathway downstream of the ephrin ligand is referred to as reverse signaling. With the EPHA2 receptor may play a role in bone remodeling through regulation of osteoclastogenesis and osteoblastogenesis. This chain is Ephrin-A2 (EFNA2), found in Homo sapiens (Human).